Reading from the N-terminus, the 44-residue chain is Photosystem I reaction center subunit IX (44 aa).

A helical transmembrane segment spans residues 7–27; that stretch reads YLSVAPVISTLWFGSLAGLLI.

The protein belongs to the PsaJ family.

Its subcellular location is the plastid. The protein resides in the chloroplast thylakoid membrane. May help in the organization of the PsaE and PsaF subunits. This is Photosystem I reaction center subunit IX from Ceratophyllum demersum (Rigid hornwort).